Consider the following 115-residue polypeptide: Large ribosomal subunit protein uL22c (115 aa).

This sequence belongs to the universal ribosomal protein uL22 family. As to quaternary structure, part of the 50S ribosomal subunit.

The protein resides in the plastid. It is found in the chloroplast. Functionally, this protein binds specifically to 23S rRNA. The globular domain of the protein is located near the polypeptide exit tunnel on the outside of the subunit, while an extended beta-hairpin is found that lines the wall of the exit tunnel in the center of the 70S ribosome. This Phaeodactylum tricornutum (strain CCAP 1055/1) protein is Large ribosomal subunit protein uL22c (rpl22).